Consider the following 263-residue polypeptide: Phosphate import ATP-binding protein PstB (263 aa).

Positions 17–258 (IDVRDLNFYY…PRRKETEDYI (242 aa)) constitute an ABC transporter domain. Position 49–56 (49–56 (GPSGCGKS)) interacts with ATP.

Belongs to the ABC transporter superfamily. Phosphate importer (TC 3.A.1.7) family. The complex is composed of two ATP-binding proteins (PstB), two transmembrane proteins (PstC and PstA) and a solute-binding protein (PstS).

The protein localises to the cell inner membrane. It catalyses the reaction phosphate(out) + ATP + H2O = ADP + 2 phosphate(in) + H(+). Functionally, part of the ABC transporter complex PstSACB involved in phosphate import. Responsible for energy coupling to the transport system. The chain is Phosphate import ATP-binding protein PstB from Ralstonia nicotianae (strain ATCC BAA-1114 / GMI1000) (Ralstonia solanacearum).